The primary structure comprises 527 residues: Bacillolysin (527 aa).

An N-terminal signal peptide occupies residues 1 to 28 (MKKSYLATSLTLSIAVGVSGFTSVPAFA). Residues 29-223 (KTKIDYHKQW…VINKYNMLDH (195 aa)) constitute a propeptide, activation peptide. Asp-276, Asp-278, and Asp-354 together coordinate Ca(2+). A Zn(2+)-binding site is contributed by His-358. Residue Glu-359 is part of the active site. Zn(2+) is bound by residues His-362 and Glu-382. Positions 393, 394, 396, 401, 404, 405, and 411 each coordinate Ca(2+). His-442 (proton donor) is an active-site residue.

Belongs to the peptidase M4 family. Ca(2+) serves as cofactor. It depends on Zn(2+) as a cofactor.

The protein resides in the secreted. It catalyses the reaction Similar, but not identical, to that of thermolysin.. In terms of biological role, extracellular zinc metalloprotease. This Brevibacillus brevis (Bacillus brevis) protein is Bacillolysin (npr).